We begin with the raw amino-acid sequence, 546 residues long: Cytochrome P450 monooxygenase fumoB (546 aa).

A helical membrane pass occupies residues 13-33 (LGYYEKLAGILGIIGLVLLFW). A glycan (N-linked (GlcNAc...) asparagine) is linked at Asn-147. A heme-binding site is contributed by Cys-488.

Belongs to the cytochrome P450 family. Heme serves as cofactor.

The protein localises to the membrane. The protein operates within secondary metabolite biosynthesis. Cytochrome P450 monooxygenase; part of the gene cluster that mediates the biosynthesis of fumosorinone, a 2-pyridone alkaloid that acts as an inhibitor of protein tyrosine phosphatase 1B which is implicated asa negative regulator of insulin receptor signaling and a potential drug target for the treatment of type II diabetes and other associated metabolic syndromes. The polyketide-amino acid backbone of fumosorinone is first assembled by the PKS-NRPS hybrid fumoS. The PKS modules condense one acetyl-CoA starter unit with 7 malonyl-CoA units, programmed C-methylations occurring after the first 3 and the sixth extensions, and cycles of full reduction occurring after the first 2 extensions. Because fumoS lacks a designated enoyl reductase (ER) domain, the required activity is provided the enoyl reductase fumoC. Upon formation of the polyketide backbone on the thiotemplate, the polyketide is transferred to the NRPS module and linked to tyrosine to produce the acyltetramic acid intermediate called prefumosorinone A. The cytochrome P450 monooxygenase fumoA then probably catalyzes an unprecedented oxidative ring expansion of prefumosorinone A to form prefumosorinone B which contains the 2-pyridone core of fumosorinone. The cytochrome P450 monooxygenase fumoB might hydroxylate the nitrogen of prefumosorinone B, but not the acyltetramic acid prefumosorinone A, to form fumosorinone. This chain is Cytochrome P450 monooxygenase fumoB, found in Cordyceps fumosorosea (strain ARSEF 2679) (Isaria fumosorosea).